Here is a 122-residue protein sequence, read N- to C-terminus: Ribosome-binding factor A (122 aa).

It belongs to the RbfA family. As to quaternary structure, monomer. Binds 30S ribosomal subunits, but not 50S ribosomal subunits or 70S ribosomes.

It localises to the cytoplasm. Its function is as follows. One of several proteins that assist in the late maturation steps of the functional core of the 30S ribosomal subunit. Associates with free 30S ribosomal subunits (but not with 30S subunits that are part of 70S ribosomes or polysomes). Required for efficient processing of 16S rRNA. May interact with the 5'-terminal helix region of 16S rRNA. The protein is Ribosome-binding factor A of Halothermothrix orenii (strain H 168 / OCM 544 / DSM 9562).